Reading from the N-terminus, the 330-residue chain is GMP reductase (330 aa).

Residue Cys-180 is the Thioimidate intermediate of the active site. 209–232 contacts NADP(+); it reads LIADGGIRHNGDIAKSVRFGASMV.

This sequence belongs to the IMPDH/GMPR family. GuaC type 2 subfamily.

It catalyses the reaction IMP + NH4(+) + NADP(+) = GMP + NADPH + 2 H(+). Functionally, catalyzes the irreversible NADPH-dependent deamination of GMP to IMP. It functions in the conversion of nucleobase, nucleoside and nucleotide derivatives of G to A nucleotides, and in maintaining the intracellular balance of A and G nucleotides. This Lactobacillus delbrueckii subsp. bulgaricus (strain ATCC BAA-365 / Lb-18) protein is GMP reductase.